Consider the following 365-residue polypeptide: MSKLKEKREKVAVSIERSSKEEAVELARVQIEKTFGKGSLIKMGESPVGKGIKSISSGSIVLDEALGIGGYPRGRIIEIFGPESSGKTTLTLQAIAEVQKEGGIAAFIDAEHALDPVYAKALGVNVAELWLSQPDTGEQALEIAEHLIRSGGIDLIVVDSVAALTPKLEIDGEMGDSQIGLQARLMSKALRKITGILSKSNTCIMFINQIRMRIGIMFGNPETTTGGNALKFYASLRLEVRKVEQITRSGSSDDVIGNKIRVKIVKNKVAPPFRKVELVIYFGKGISREAGILDAAIKHNLIQKTGSWYSLGDNKLGQGRESVIEYLSKEVELTNDLDKRLRKVIFNNFDQEDVSFIEYKENESE.

Position 81-88 (81-88 (GPESSGKT)) interacts with ATP.

This sequence belongs to the RecA family.

The protein localises to the cytoplasm. Its function is as follows. Can catalyze the hydrolysis of ATP in the presence of single-stranded DNA, the ATP-dependent uptake of single-stranded DNA by duplex DNA, and the ATP-dependent hybridization of homologous single-stranded DNAs. It interacts with LexA causing its activation and leading to its autocatalytic cleavage. This is Protein RecA from Borreliella afzelii (strain PKo) (Borrelia afzelii).